We begin with the raw amino-acid sequence, 145 residues long: Large ribosomal subunit protein uL13 (145 aa).

The protein belongs to the universal ribosomal protein uL13 family. In terms of assembly, part of the 50S ribosomal subunit.

In terms of biological role, this protein is one of the early assembly proteins of the 50S ribosomal subunit, although it is not seen to bind rRNA by itself. It is important during the early stages of 50S assembly. This chain is Large ribosomal subunit protein uL13, found in Bacillus cereus (strain G9842).